The following is a 413-amino-acid chain: Aminopeptidase PepS (413 aa).

Residues E253, E319, E343, H348, H381, and D383 each contribute to the a divalent metal cation site.

The protein belongs to the peptidase M29 family. Monomer. Requires Co(2+) as cofactor. Zn(2+) serves as cofactor. Mg(2+) is required as a cofactor.

Functionally, exhibits a high specificity towards peptides possessing arginine or aromatic amino acids at the N-terminus. Could be involved both in bacterial growth by supplying amino acids. The sequence is that of Aminopeptidase PepS (pepS) from Streptococcus thermophilus.